Consider the following 205-residue polypeptide: Octanoyltransferase (205 aa).

The 176-residue stretch at alanine 29–asparagine 204 folds into the BPL/LPL catalytic domain. Substrate-binding positions include arginine 68–histidine 75, alanine 135–glycine 137, and glycine 148–serine 150. Residue cysteine 166 is the Acyl-thioester intermediate of the active site.

Belongs to the LipB family.

Its subcellular location is the cytoplasm. It catalyses the reaction octanoyl-[ACP] + L-lysyl-[protein] = N(6)-octanoyl-L-lysyl-[protein] + holo-[ACP] + H(+). It functions in the pathway protein modification; protein lipoylation via endogenous pathway; protein N(6)-(lipoyl)lysine from octanoyl-[acyl-carrier-protein]: step 1/2. Functionally, catalyzes the transfer of endogenously produced octanoic acid from octanoyl-acyl-carrier-protein onto the lipoyl domains of lipoate-dependent enzymes. Lipoyl-ACP can also act as a substrate although octanoyl-ACP is likely to be the physiological substrate. In Dechloromonas aromatica (strain RCB), this protein is Octanoyltransferase.